A 170-amino-acid polypeptide reads, in one-letter code: UPF0316 protein CLK_3798 (170 aa).

The next 2 helical transmembrane spans lie at 1 to 21 (MLSY…LMTI) and 36 to 56 (IIGF…LSGI).

This sequence belongs to the UPF0316 family.

Its subcellular location is the cell membrane. This is UPF0316 protein CLK_3798 from Clostridium botulinum (strain Loch Maree / Type A3).